The chain runs to 206 residues: Large ribosomal subunit protein uL4 (206 aa).

The segment at Met63–Val93 is disordered. Positions Tyr64–Ala77 are enriched in basic residues.

It belongs to the universal ribosomal protein uL4 family. Part of the 50S ribosomal subunit.

In terms of biological role, one of the primary rRNA binding proteins, this protein initially binds near the 5'-end of the 23S rRNA. It is important during the early stages of 50S assembly. It makes multiple contacts with different domains of the 23S rRNA in the assembled 50S subunit and ribosome. Functionally, forms part of the polypeptide exit tunnel. The protein is Large ribosomal subunit protein uL4 of Rhizobium meliloti (strain 1021) (Ensifer meliloti).